A 359-amino-acid polypeptide reads, in one-letter code: Cyclin-Y-like protein 1 (359 aa).

Residues Ser-67, Ser-105, and Ser-112 each carry the phosphoserine modification. The 123-residue stretch at 145-267 folds into the Cyclin N-terminal domain; that stretch reads VTLAIYYHIK…CQILKDITVE (123 aa). Ser-344 is modified (phosphoserine).

This sequence belongs to the cyclin family. Cyclin Y subfamily. Interacts with CDK16; this interaction mutually increases the stability of CDK16 and CCNYL1 and increases the kinase activity of CDK16.

It localises to the cell membrane. Its function is as follows. Key regulator of Wnt signaling implicated in various biological processes including male fertility, embryonic neurogenesis and cortex development. Activates the cyclin-dependent kinase CDK16, and promotes sperm maturation. The chain is Cyclin-Y-like protein 1 from Homo sapiens (Human).